A 499-amino-acid polypeptide reads, in one-letter code: Endosomal/lysosomal proton channel TMEM175 (499 aa).

Topologically, residues 1–30 are cytoplasmic; the sequence is MSRLQTEEQAVDSEGDSSLHRRNEEGTQSS. The segment at 1-30 is disordered; sequence MSRLQTEEQAVDSEGDSSLHRRNEEGTQSS. Phosphothreonine is present on T6. Residues 31–53 traverse the membrane as a helical segment; it reads HRMLGFSDALLSIIATVMILPVT. Residues 32–38 carry the RxxxFSD motif 1 motif; it reads RMLGFSD. At 54 to 74 the chain is on the lumenal side; the sequence is HTEISPEQQFDKSIQKLLATR. The interval 55–60 is short helix H1-1; it reads TEISPE. Positions 62 to 68 are short helix H2-1; sequence QFDKSIQ. Residues 75–97 form a helical membrane-spanning segment; sequence IAVYLMTFLIVTVAWTAHTRLFQ. Residues 98–103 are Cytoplasmic-facing; the sequence is VVGKID. Residues 104 to 125 traverse the membrane as a helical segment; it reads DTLALLNLACMMTITLLPYTFS. The Lumenal portion of the chain corresponds to 126–135; the sequence is LMVTFPDVPL. The chain crosses the membrane as a helical span at residues 136–157; it reads GIFLFCVCVIAIGSVQAMIVGY. The Cytoplasmic segment spans residues 158-181; the sequence is AFHFPHLLNPQIQCSTHRDLSRRH. The helical transmembrane segment at 182-202 threads the bilayer; that stretch reads ILHLVLRGPALCFVAAVFSLF. Over 203–207 the chain is Lumenal; that stretch reads FFPLS. Residues 208–227 traverse the membrane as a helical segment; sequence YLLMVTVIFLPHISKATTWC. Topologically, residues 228–254 are cytoplasmic; it reads KDKLMGQRESPAHDMEPFSIDLHAPLS. The helical transmembrane segment at 255–279 threads the bilayer; sequence KERVEAFSDGVYAIVATLLILDICE. The short motif at 257–263 is the RxxxFSD motif 2 element; the sequence is RVEAFSD. The Lumenal portion of the chain corresponds to 280 to 306; sequence DNVPDPKDVQEKFSGSLVAALGAYGPQ. A short helix H1-2 region spans residues 285 to 293; the sequence is PKDVQEKFS. A short helix H2-2 region spans residues 295 to 301; sequence SLVAALG. A helical transmembrane segment spans residues 307-329; that stretch reads FLAYFGSFATVGLLWFAHHSLFL. The Cytoplasmic portion of the chain corresponds to 330 to 335; the sequence is HVRKAT. A helical transmembrane segment spans residues 336 to 357; it reads QTMGLLNILSLAFVGGLPLAYQ. The Lumenal portion of the chain corresponds to 358 to 372; the sequence is QTSAFARQPHDELER. Residues 373 to 393 form a helical membrane-spanning segment; that stretch reads VRVSCAIIFFASIFQFAIWTT. Over 394-413 the chain is Cytoplasmic; that stretch reads ALLHQTETLQPAVQFGGQEH. Residues 414-437 form a helical membrane-spanning segment; that stretch reads AFMFAKLALYPCASLLAFAATCLL. Residues 438–439 lie on the Lumenal side of the membrane; the sequence is SR. The chain crosses the membrane as a helical span at residues 440–466; sequence FSTAIFHLMQISVPFAFLLLRLLVRLA. At 467-499 the chain is on the cytoplasmic side; it reads LAGLQVLRGLWPHHPQQDQSEPEAQSQLLPDPC.

This sequence belongs to the TMEM175 family. As to quaternary structure, homodimer. Interacts with AKT (AKT1, AKT2 or AKT3); leading to formation of the lysoK(GF) complex, which activates the channel. Interacts with LAMP1; inhibiting the proton channel activity of TMEM175. Interacts with LAMP2; inhibiting the proton channel activity of TMEM175.

It is found in the endosome membrane. Its subcellular location is the lysosome membrane. The enzyme catalyses H(+)(in) = H(+)(out). It catalyses the reaction K(+)(in) = K(+)(out). With respect to regulation, active at low pH (under pH 4.6): proton channel activity is activated by luminal side protons. Polyunsaturated fatty acids, such as arachidonic acid, also activate the channel activity. Proton channel activity is directly inhibited by LAMP1 or LAMP2, facilitating lysosomal acidification. Channel activity is activated following interaction with AKT (AKT1, AKT2 or AKT3): interaction promotes activation from closed to an open state. Activation by AKT is independent of AKT serine/threonine-protein kinase activity. In terms of biological role, proton-activated proton channel that catalyzes proton efflux from endosomes and lysosomes to maintain a steady-state pH. Activated at low pH (under pH 4.6) by luminal side protons: selectively mediates lysosomal proton release from lysosomes, eliciting a proton leak that balances V-ATPase activity to maintain pH homeostasis. Regulation of lumenal pH stability is required for autophagosome-lysosome fusion. Also acts as a potassium channel at higher pH, regulating potassium conductance in endosomes and lysosomes. Constitutes the pore-forming subunit of the lysoK(GF) complex, a complex activated by extracellular growth factors. The lysoK(GF) complex is composed of TMEM175 and AKT (AKT1, AKT2 or AKT3), a major target of growth factor receptors: in the complex, TMEM175 channel is opened by conformational changes by AKT, leading to its activation. The lysoK(GF) complex is required to protect neurons against stress-induced damage. The polypeptide is Endosomal/lysosomal proton channel TMEM175 (Mus musculus (Mouse)).